A 149-amino-acid polypeptide reads, in one-letter code: uncharacterized protein (149 aa).

Position 21 is a phosphoserine (Ser-21). A run of 2 helical transmembrane segments spans residues 48–68 and 72–92; these read FMEF…WVLG and VLAA…FQLV. The segment at 116-149 is disordered; that stretch reads AEEVPPPSYPSLEEENEGNEEIEESEEMNTLLSK. Residues 127–142 are compositionally biased toward acidic residues; that stretch reads LEEENEGNEEIEESEE.

It is found in the membrane. This is an uncharacterized protein from Schizosaccharomyces pombe (strain 972 / ATCC 24843) (Fission yeast).